Reading from the N-terminus, the 142-residue chain is Serine/threonine-protein kinase BtrW (142 aa).

The protein belongs to the anti-sigma-factor family. In terms of assembly, probably able to multimerize; interacts with BtrV.

It catalyses the reaction L-seryl-[protein] + ATP = O-phospho-L-seryl-[protein] + ADP + H(+). The catalysed reaction is L-threonyl-[protein] + ATP = O-phospho-L-threonyl-[protein] + ADP + H(+). Its function is as follows. Possible negative regulator of sigma-B activity. Phosphorylates and inactivates its specific antagonist protein, BtrV. Upon phosphorylation of BtrV, BtrW is released and binds to an unknown partner(s) that might be sigma-B, thereby blocking its ability to form a complex with its partner (possibly an RNA polymerase holoenzyme (E-sigma-B)). Involved in type III secretion system (T3SS). Phosphorylates BtrV. The polypeptide is Serine/threonine-protein kinase BtrW (btrW) (Bordetella bronchiseptica (strain ATCC BAA-588 / NCTC 13252 / RB50) (Alcaligenes bronchisepticus)).